A 219-amino-acid polypeptide reads, in one-letter code: Cytochrome c oxidase assembly protein CtaG (219 aa).

Residues 1 to 13 (MDATDQGKSTSTT) show a composition bias toward polar residues. The tract at residues 1–24 (MDATDQGKSTSTTAAQAAPGKAAP) is disordered. Topologically, residues 1–29 (MDATDQGKSTSTTAAQAAPGKAAPRRGIG) are cytoplasmic. Positions 14-24 (AAQAAPGKAAP) are enriched in low complexity. Residues 30 to 52 (RDALVGGICGAVVVLMIGASYAA) form a helical; Signal-anchor for type II membrane protein membrane-spanning segment. Topologically, residues 53–219 (VPFYNWFCRA…GEPDKPRGSL (167 aa)) are periplasmic.

Belongs to the COX11/CtaG family.

It is found in the cell inner membrane. In terms of biological role, exerts its effect at some terminal stage of cytochrome c oxidase synthesis, probably by being involved in the insertion of the copper B into subunit I. This Bradyrhizobium sp. (strain ORS 278) protein is Cytochrome c oxidase assembly protein CtaG.